A 529-amino-acid polypeptide reads, in one-letter code: Berberine bridge enzyme-like 7 (529 aa).

The first 19 residues, 1–19 (MKEALSILCLALLVSVSEA), serve as a signal peptide directing secretion. Cysteines 32 and 95 form a disulfide. Asn-52 carries N-linked (GlcNAc...) asparagine glycosylation. The region spanning 69–247 (YSSPNFKKLL…LSWKINLVKV (179 aa)) is the FAD-binding PCMH-type domain. The segment at residues 110 to 172 (HDLEGLSYRS…QTLAFPAGVC (63 aa)) is a cross-link (6-(S-cysteinyl)-8alpha-(pros-histidyl)-FAD (His-Cys)). N-linked (GlcNAc...) asparagine glycosylation is found at Asn-257, Asn-341, and Asn-439.

The protein belongs to the oxygen-dependent FAD-linked oxidoreductase family. Requires FAD as cofactor. The FAD cofactor is bound via a bicovalent 6-S-cysteinyl, 8alpha-N1-histidyl FAD linkage.

It localises to the secreted. Its subcellular location is the cell wall. Its function is as follows. Probable flavin-dependent oxidoreductase. The protein is Berberine bridge enzyme-like 7 of Arabidopsis thaliana (Mouse-ear cress).